The sequence spans 330 residues: Elongation factor Ts, mitochondrial (330 aa).

Residues 1–16 (MYRNCRKAFTFSLRHY) constitute a mitochondrion transit peptide.

It belongs to the EF-Ts family.

The protein resides in the mitochondrion. Associates with the EF-Tu.GDP complex and induces the exchange of GDP to GTP. It remains bound to the aminoacyl-tRNA.EF-Tu.GTP complex up to the GTP hydrolysis stage on the ribosome. This is Elongation factor Ts, mitochondrial from Laccaria bicolor (strain S238N-H82 / ATCC MYA-4686) (Bicoloured deceiver).